Consider the following 406-residue polypeptide: Tryptophan 2,3-dioxygenase (406 aa).

Residues 72–76 (FIITH) and arginine 144 contribute to the substrate site. A heme-binding site is contributed by histidine 328. Position 342 (threonine 342) interacts with substrate.

It belongs to the tryptophan 2,3-dioxygenase family. Homotetramer. Dimer of dimers. Heme serves as cofactor.

It carries out the reaction L-tryptophan + O2 = N-formyl-L-kynurenine. The protein operates within amino-acid degradation; L-tryptophan degradation via kynurenine pathway; L-kynurenine from L-tryptophan: step 1/2. Its function is as follows. Heme-dependent dioxygenase that catalyzes the oxidative cleavage of the L-tryptophan (L-Trp) pyrrole ring and converts L-tryptophan to N-formyl-L-kynurenine. Catalyzes the oxidative cleavage of the indole moiety. The chain is Tryptophan 2,3-dioxygenase from Homo sapiens (Human).